The sequence spans 235 residues: Aspartate/glutamate leucyltransferase (235 aa).

This sequence belongs to the R-transferase family. Bpt subfamily.

It localises to the cytoplasm. It carries out the reaction N-terminal L-glutamyl-[protein] + L-leucyl-tRNA(Leu) = N-terminal L-leucyl-L-glutamyl-[protein] + tRNA(Leu) + H(+). The catalysed reaction is N-terminal L-aspartyl-[protein] + L-leucyl-tRNA(Leu) = N-terminal L-leucyl-L-aspartyl-[protein] + tRNA(Leu) + H(+). Its function is as follows. Functions in the N-end rule pathway of protein degradation where it conjugates Leu from its aminoacyl-tRNA to the N-termini of proteins containing an N-terminal aspartate or glutamate. This is Aspartate/glutamate leucyltransferase from Pseudomonas putida (strain W619).